Consider the following 178-residue polypeptide: Interleukin-10 (178 aa).

Residues 1 to 18 form the signal peptide; the sequence is MHSSALLCCLVVLTGVRA. Intrachain disulfides connect Cys30/Cys126 and Cys80/Cys132. Asn134 carries an N-linked (GlcNAc...) asparagine glycan.

It belongs to the IL-10 family. In terms of assembly, homodimer. Interacts with IL10RA and IL10RB.

The protein localises to the secreted. Major immune regulatory cytokine that acts on many cells of the immune system where it has profound anti-inflammatory functions, limiting excessive tissue disruption caused by inflammation. Mechanistically, IL10 binds to its heterotetrameric receptor comprising IL10RA and IL10RB leading to JAK1 and STAT2-mediated phosphorylation of STAT3. In turn, STAT3 translocates to the nucleus where it drives expression of anti-inflammatory mediators. Targets antigen-presenting cells (APCs) such as macrophages and monocytes and inhibits their release of pro-inflammatory cytokines including granulocyte-macrophage colony-stimulating factor /GM-CSF, granulocyte colony-stimulating factor/G-CSF, IL-1 alpha, IL-1 beta, IL-6, IL-8 and TNF-alpha. Also interferes with antigen presentation by reducing the expression of MHC-class II and co-stimulatory molecules, thereby inhibiting their ability to induce T cell activation. In addition, controls the inflammatory response of macrophages by reprogramming essential metabolic pathways including mTOR signaling. This Papio hamadryas (Hamadryas baboon) protein is Interleukin-10 (IL10).